The sequence spans 201 residues: MKKILTTPIKAEDLQDIRVGDVIYLTGTLVTCRDVCHRRLIELKRPIPYDLNGKAIFHAGPIVRKNGDKWEMVSVGPTTSMRMESFEREFIEQTGVKLVVGKGGMGPLTEEGCQKFKALHVIFPAGCAVLAATQVEEIEEVHWTELGMPESLWVCRVKEFGPLIVSIDTHGNNLIAENKKLFAERRDPIVEEICEHVHYIK.

His-37 is an active-site residue.

The protein belongs to the class-I fumarase family. As to quaternary structure, heterotetramer of two alpha and two beta subunits.

The enzyme catalyses (2R,3R)-tartrate = oxaloacetate + H2O. The polypeptide is L(+)-tartrate dehydratase subunit beta (ttdB) (Escherichia coli O6:K15:H31 (strain 536 / UPEC)).